The primary structure comprises 1035 residues: Ephrin type-A receptor 6 (1035 aa).

Residues 1–22 (MGGCEVREFLLQFGFFLPLLTA) form the signal peptide. Residues 23 to 549 (WTGDCSHVSN…MAAEQGQILV (527 aa)) lie on the Extracellular side of the membrane. Residues 33-211 (QVVLLDTSTV…FYKKCPFTVR (179 aa)) form the Eph LBD domain. Fibronectin type-III domains follow at residues 330-440 (PPSA…TDQD) and 441-536 (APSL…TGDE). N-linked (GlcNAc...) asparagine glycosylation is found at asparagine 342, asparagine 396, and asparagine 409. A helical transmembrane segment spans residues 550–570 (IATAAVGGFTLLVILTLFFLI). Over 571–1035 (TGRCQWYIKA…MHIQEKGFHV (465 aa)) the chain is Cytoplasmic. Phosphotyrosine; by autocatalysis is present on residues tyrosine 605 and tyrosine 611. A Protein kinase domain is found at 630 to 943 (IRIERVIGAG…RNPSALHTLV (314 aa)). ATP-binding positions include 636–644 (IGAGEFGEV) and lysine 662. Aspartate 797 serves as the catalytic Proton acceptor. Residues tyrosine 830 and tyrosine 977 each carry the phosphotyrosine; by autocatalysis modification. Residues 960-1024 (PLFVTVGDWL…VSSIQTLRLH (65 aa)) enclose the SAM domain. Residues 1033–1035 (FHV) carry the PDZ-binding motif.

Belongs to the protein kinase superfamily. Tyr protein kinase family. Ephrin receptor subfamily. As to quaternary structure, heterotetramer upon binding of the ligand. The heterotetramer is composed of an ephrin dimer and a receptor dimer. Oligomerization is probably required to induce biological responses. Interacts (via SAM domain) with ANKS1A (via SAM domain). Brain.

Its subcellular location is the membrane. It carries out the reaction L-tyrosyl-[protein] + ATP = O-phospho-L-tyrosyl-[protein] + ADP + H(+). Functionally, receptor tyrosine kinase which binds promiscuously GPI-anchored ephrin-A family ligands residing on adjacent cells, leading to contact-dependent bidirectional signaling into neighboring cells. The signaling pathway downstream of the receptor is referred to as forward signaling while the signaling pathway downstream of the ephrin ligand is referred to as reverse signaling. The polypeptide is Ephrin type-A receptor 6 (Epha6) (Rattus norvegicus (Rat)).